We begin with the raw amino-acid sequence, 245 residues long: tRNA1(Val) (adenine(37)-N6)-methyltransferase (245 aa).

The protein belongs to the methyltransferase superfamily. tRNA (adenine-N(6)-)-methyltransferase family.

Its subcellular location is the cytoplasm. The catalysed reaction is adenosine(37) in tRNA1(Val) + S-adenosyl-L-methionine = N(6)-methyladenosine(37) in tRNA1(Val) + S-adenosyl-L-homocysteine + H(+). Specifically methylates the adenine in position 37 of tRNA(1)(Val) (anticodon cmo5UAC). This chain is tRNA1(Val) (adenine(37)-N6)-methyltransferase, found in Klebsiella pneumoniae (strain 342).